We begin with the raw amino-acid sequence, 858 residues long: DNA mismatch repair protein MutS (858 aa).

602–609 (GPNMSGKS) contacts ATP.

The protein belongs to the DNA mismatch repair MutS family.

This protein is involved in the repair of mismatches in DNA. It is possible that it carries out the mismatch recognition step. This protein has a weak ATPase activity. Overexpression of mutSL partially suppresses the high spontaneous mutation frequency of a ytkD/mutM/mutY triple disruption which lacks the system required to prevent damage by oxidized guanine (8-oxo-dGTP). This suggests that MutSL also functions to repair mismatches due to oxidative stress in both growing and stationary phase cells. The protein is DNA mismatch repair protein MutS of Bacillus subtilis (strain 168).